The following is a 674-amino-acid chain: CLK4-associating serine/arginine rich protein (674 aa).

Residue Ser101 is modified to Phosphoserine. 2 disordered regions span residues 171 to 232 (TVAE…GMAD) and 258 to 674 (EKAM…HYRH). Positions 182 to 214 (PEEEESAAEEESNSDEDEVIPDIDVEVDVDELN) are enriched in acidic residues. A compositionally biased stretch (basic residues) spans 265 to 283 (RRSRRQRREFREKRLRGRK). Phosphoserine occurs at positions 285 and 294. The segment covering 290–313 (ARRDSPTYDPYKRSPSESSSESRS) has biased composition (basic and acidic residues). Thr327 is subject to Phosphothreonine. Phosphoserine is present on residues Ser331 and Ser335. Residues 356 to 365 (PPAPPQPGGP) show a composition bias toward pro residues. The segment covering 378–399 (SSSSSSSSASRTSSSRSSSRSS) has biased composition (low complexity). Basic residues-rich tracts occupy residues 411–443 (SGRH…RRHS) and 481–492 (RGGRGLRHHSSS). 2 stretches are compositionally biased toward low complexity: residues 493–506 (RSRS…SRSR) and 514–532 (HSPS…SQSP). Ser547 is modified (phosphoserine). Thr573 carries the post-translational modification Phosphothreonine. Residues 585–647 (ALNRQFKADK…ERQYSRQSRS (63 aa)) adopt a coiled-coil conformation. 2 stretches are compositionally biased toward basic and acidic residues: residues 590 to 617 (FKAD…ELRA) and 625 to 641 (KERE…ERQY). The span at 642 to 651 (SRQSRSPSPR) shows a compositional bias: low complexity. Basic residues predominate over residues 659–674 (SRRRSRSRSRSPHYRH).

Belongs to the splicing factor SR family. As to quaternary structure, probably interacts with CLK4. Post-translationally, phosphorylated in vitro by CLK4.

The protein resides in the nucleus. Probably functions as an alternative splicing regulator. May regulate the mRNA splicing of genes such as CLK1. May act by regulating members of the CLK kinase family. This chain is CLK4-associating serine/arginine rich protein (CLASRP), found in Homo sapiens (Human).